The primary structure comprises 283 residues: 4-hydroxy-3-methylbut-2-enyl diphosphate reductase (283 aa).

Residue C12 participates in [4Fe-4S] cluster binding. The (2E)-4-hydroxy-3-methylbut-2-enyl diphosphate site is built by H41 and H74. Dimethylallyl diphosphate contacts are provided by H41 and H74. Positions 41 and 74 each coordinate isopentenyl diphosphate. Position 96 (C96) interacts with [4Fe-4S] cluster. H124 is a binding site for (2E)-4-hydroxy-3-methylbut-2-enyl diphosphate. H124 is a dimethylallyl diphosphate binding site. H124 contacts isopentenyl diphosphate. E126 functions as the Proton donor in the catalytic mechanism. T161 contributes to the (2E)-4-hydroxy-3-methylbut-2-enyl diphosphate binding site. C189 serves as a coordination point for [4Fe-4S] cluster. The (2E)-4-hydroxy-3-methylbut-2-enyl diphosphate site is built by S217, N219, and S261. Dimethylallyl diphosphate is bound by residues S217, N219, and S261. Isopentenyl diphosphate-binding residues include S217, N219, and S261.

Belongs to the IspH family. It depends on [4Fe-4S] cluster as a cofactor.

It carries out the reaction isopentenyl diphosphate + 2 oxidized [2Fe-2S]-[ferredoxin] + H2O = (2E)-4-hydroxy-3-methylbut-2-enyl diphosphate + 2 reduced [2Fe-2S]-[ferredoxin] + 2 H(+). The enzyme catalyses dimethylallyl diphosphate + 2 oxidized [2Fe-2S]-[ferredoxin] + H2O = (2E)-4-hydroxy-3-methylbut-2-enyl diphosphate + 2 reduced [2Fe-2S]-[ferredoxin] + 2 H(+). Its pathway is isoprenoid biosynthesis; dimethylallyl diphosphate biosynthesis; dimethylallyl diphosphate from (2E)-4-hydroxy-3-methylbutenyl diphosphate: step 1/1. It functions in the pathway isoprenoid biosynthesis; isopentenyl diphosphate biosynthesis via DXP pathway; isopentenyl diphosphate from 1-deoxy-D-xylulose 5-phosphate: step 6/6. Catalyzes the conversion of 1-hydroxy-2-methyl-2-(E)-butenyl 4-diphosphate (HMBPP) into a mixture of isopentenyl diphosphate (IPP) and dimethylallyl diphosphate (DMAPP). Acts in the terminal step of the DOXP/MEP pathway for isoprenoid precursor biosynthesis. In Anaeromyxobacter sp. (strain Fw109-5), this protein is 4-hydroxy-3-methylbut-2-enyl diphosphate reductase.